We begin with the raw amino-acid sequence, 325 residues long: Delta(1)-pyrroline-2-carboxylate reductase (325 aa).

The protein belongs to the ornithine cyclodeaminase/mu-crystallin family.

It carries out the reaction L-proline + NAD(+) = 1-pyrroline-2-carboxylate + NADH + H(+). The enzyme catalyses L-proline + NADP(+) = 1-pyrroline-2-carboxylate + NADPH + H(+). Catalyzes the reduction of Delta(1)-pyrroline-2-carboxylate (Pyr2C) to L-proline, using preferentially NADPH over NADH as the electron donor. Is likely involved in a degradation pathway that converts trans-3-hydroxy-L-proline (t3LHyp) to L-proline. This Bacillus cereus (strain ATCC 10987 / NRS 248) protein is Delta(1)-pyrroline-2-carboxylate reductase.